Reading from the N-terminus, the 157-residue chain is Cell number regulator 10 (157 aa).

A run of 2 helical transmembrane segments spans residues 41-57 (DCGLCCLTCWCPCITFG) and 66-83 (GATSCGTAGALYAVLAYF).

It belongs to the cornifelin family. Expressed in roots, leaves, stalks, immature ears and silks.

The protein localises to the membrane. This Zea mays (Maize) protein is Cell number regulator 10 (CNR10).